The primary structure comprises 229 residues: Lytic polysaccharide monooxygenase-like protein ham-7 (229 aa).

A signal peptide spans 1–17 (MLTSTLLALASAALASA). His-18 lines the Cu(2+) pocket. Disulfide bonds link Cys-47/Cys-157 and Cys-122/Cys-178. 5 N-linked (GlcNAc...) asparagine glycosylation sites follow: Asn-55, Asn-98, Asn-139, Asn-174, and Asn-180. A lipid anchor (GPI-anchor amidated serine) is attached at Ser-206. A propeptide spans 207–229 (AAASLARMAGWVPLVAGGLWLML) (removed in mature form).

It belongs to the X325 family. Cu(2+) serves as cofactor.

It is found in the cell membrane. In terms of biological role, lytic polysaccharide monooxygenase-like protein that has diverged to biological functions other than polysaccharide degradation since it does not perform oxidative cleavage of polysaccharides. Acts as the major cell wall sensor that regulates MAK-1-dependent hyphal anastomosis, the fusion of hyphal cells. May also act as a cell surface-bound protein that functions in the copper-accumulation pathway. The polypeptide is Lytic polysaccharide monooxygenase-like protein ham-7 (Neurospora crassa (strain ATCC 24698 / 74-OR23-1A / CBS 708.71 / DSM 1257 / FGSC 987)).